The chain runs to 262 residues: Apolipoprotein A-I-2 (262 aa).

A signal peptide spans 1-18; the sequence is MQFLALALTILLAAATQA. The 3 X approximate tandem repeats stretch occupies residues 32–63; it reads VKVAMMEYMAQVKETAQRSIDHLDDTEYKEYK. 2 tandem repeats follow at residues 64 to 85 and 87 to 107. Residues 64-262 are 10 X approximate tandem repeats; the sequence is VQLSQSLDNL…YETISQAMKA (199 aa). Residues 108–118 form a 3; half-length repeat; that stretch reads KDVEELRSQLE. 5 consecutive repeat copies span residues 119–140, 141–162, 163–184, 185–206, and 207–228. The 9; half-length repeat unit spans residues 229 to 239; it reads PLTTDFKGQLG. Repeat unit 10 spans residues 240–262; it reads PAAEQAKEKLMALYETISQAMKA.

Belongs to the apolipoprotein A1/A4/E family.

It localises to the secreted. In terms of biological role, participates in the reverse transport of cholesterol from tissues to the liver for excretion by promoting cholesterol efflux from tissues and by acting as a cofactor for the lecithin cholesterol acyltransferase (LCAT). In Oncorhynchus mykiss (Rainbow trout), this protein is Apolipoprotein A-I-2.